The sequence spans 32 residues: Cytochrome b6-f complex subunit 7 (32 aa).

The helical transmembrane segment at 5–25 threads the bilayer; sequence IFGTAAIFWVLIPIGLVGGAL.

It belongs to the PetM family. As to quaternary structure, the 4 large subunits of the cytochrome b6-f complex are cytochrome b6, subunit IV (17 kDa polypeptide, PetD), cytochrome f and the Rieske protein, while the 4 small subunits are PetG, PetL, PetM and PetN. The complex functions as a dimer.

Its subcellular location is the cellular thylakoid membrane. Functionally, component of the cytochrome b6-f complex, which mediates electron transfer between photosystem II (PSII) and photosystem I (PSI), cyclic electron flow around PSI, and state transitions. The polypeptide is Cytochrome b6-f complex subunit 7 (Synechococcus sp. (strain CC9902)).